A 368-amino-acid chain; its full sequence is Putative J domain-containing protein R445 (368 aa).

One can recognise a J domain in the interval 13–83 (DLYKILGLTN…KQRNEYNQRL (71 aa)).

The polypeptide is Putative J domain-containing protein R445 (Acanthamoeba polyphaga mimivirus (APMV)).